The chain runs to 497 residues: NADH-quinone oxidoreductase subunit N (497 aa).

A run of 13 helical transmembrane segments spans residues 12–32, 40–60, 80–100, 116–136, 166–186, 208–228, 240–260, 284–304, 316–336, 341–361, 383–403, 430–450, and 457–477; these read MAPE…DLAL, PLAW…AAMI, AFKF…AEWA, LFAL…TLFV, VING…VFGL, LALA…TVPF, PVPA…ALLL, MQPI…VVAL, SGIA…WAMI, MYLL…AHIV, AAAL…AGFI, TVIS…RPTF, and LPAG…AIGW.

The protein belongs to the complex I subunit 2 family. NDH-1 is composed of 14 different subunits. Subunits NuoA, H, J, K, L, M, N constitute the membrane sector of the complex.

Its subcellular location is the cell membrane. It carries out the reaction a quinone + NADH + 5 H(+)(in) = a quinol + NAD(+) + 4 H(+)(out). NDH-1 shuttles electrons from NADH, via FMN and iron-sulfur (Fe-S) centers, to quinones in the respiratory chain. The immediate electron acceptor for the enzyme in this species is believed to be a menaquinone. Couples the redox reaction to proton translocation (for every two electrons transferred, four hydrogen ions are translocated across the cytoplasmic membrane), and thus conserves the redox energy in a proton gradient. This Geobacillus kaustophilus (strain HTA426) protein is NADH-quinone oxidoreductase subunit N.